Consider the following 244-residue polypeptide: DNA repair protein RecO (244 aa).

This sequence belongs to the RecO family.

Its function is as follows. Involved in DNA repair and RecF pathway recombination. In Myxococcus xanthus (strain DK1622), this protein is DNA repair protein RecO.